A 401-amino-acid polypeptide reads, in one-letter code: Formate-dependent phosphoribosylglycinamide formyltransferase (401 aa).

N(1)-(5-phospho-beta-D-ribosyl)glycinamide contacts are provided by residues 22-23 and E82; that span reads EL. Residues R115, K157, 162–167, 197–200, and E205 contribute to the ATP site; these read SSGKGQ and EGFI. The region spanning 120–315 is the ATP-grasp domain; that stretch reads RLAAESLGLP…EFELHARAIL (196 aa). Mg(2+) is bound by residues E274 and E286. Residues D293, K362, and 369–370 contribute to the N(1)-(5-phospho-beta-D-ribosyl)glycinamide site; that span reads RR.

This sequence belongs to the PurK/PurT family. In terms of assembly, homodimer.

The catalysed reaction is N(1)-(5-phospho-beta-D-ribosyl)glycinamide + formate + ATP = N(2)-formyl-N(1)-(5-phospho-beta-D-ribosyl)glycinamide + ADP + phosphate + H(+). The protein operates within purine metabolism; IMP biosynthesis via de novo pathway; N(2)-formyl-N(1)-(5-phospho-D-ribosyl)glycinamide from N(1)-(5-phospho-D-ribosyl)glycinamide (formate route): step 1/1. Involved in the de novo purine biosynthesis. Catalyzes the transfer of formate to 5-phospho-ribosyl-glycinamide (GAR), producing 5-phospho-ribosyl-N-formylglycinamide (FGAR). Formate is provided by PurU via hydrolysis of 10-formyl-tetrahydrofolate. The polypeptide is Formate-dependent phosphoribosylglycinamide formyltransferase (Cupriavidus necator (strain ATCC 17699 / DSM 428 / KCTC 22496 / NCIMB 10442 / H16 / Stanier 337) (Ralstonia eutropha)).